Consider the following 282-residue polypeptide: Succinate dehydrogenase [ubiquinone] iron-sulfur subunit, mitochondrial (282 aa).

A 2Fe-2S ferredoxin-type domain is found at 43–131 (YRFNPEAPGA…STKIYPLPHM (89 aa)). [2Fe-2S] cluster contacts are provided by Cys-91, Cys-96, Cys-99, and Cys-111. Positions 174–204 (ERDRLDGLYECILCACCSTSCPSYWWNADKY) constitute a 4Fe-4S ferredoxin-type domain. [4Fe-4S] cluster contacts are provided by Cys-184, Cys-187, and Cys-190. Residue Cys-194 participates in [3Fe-4S] cluster binding. Trp-199 contacts a ubiquinone. [3Fe-4S] cluster is bound by residues Cys-241 and Cys-247. A [4Fe-4S] cluster-binding site is contributed by Cys-251.

It belongs to the succinate dehydrogenase/fumarate reductase iron-sulfur protein family. As to quaternary structure, component of complex II composed of four subunits: a flavoprotein (FP), an iron-sulfur protein (IP), and a cytochrome b composed of a large and a small subunit. Requires [2Fe-2S] cluster as cofactor. The cofactor is [3Fe-4S] cluster. [4Fe-4S] cluster is required as a cofactor.

It is found in the mitochondrion inner membrane. The catalysed reaction is a quinone + succinate = fumarate + a quinol. The protein operates within carbohydrate metabolism; tricarboxylic acid cycle; fumarate from succinate (eukaryal route): step 1/1. Its function is as follows. Iron-sulfur protein (IP) subunit of succinate dehydrogenase (SDH) that is involved in complex II of the mitochondrial electron transport chain and is responsible for transferring electrons from succinate to ubiquinone (coenzyme Q). The chain is Succinate dehydrogenase [ubiquinone] iron-sulfur subunit, mitochondrial from Caenorhabditis briggsae.